A 119-amino-acid chain; its full sequence is Holo-[acyl-carrier-protein] synthase (119 aa).

Positions 8 and 58 each coordinate Mg(2+).

Belongs to the P-Pant transferase superfamily. AcpS family. Mg(2+) is required as a cofactor.

It is found in the cytoplasm. The catalysed reaction is apo-[ACP] + CoA = holo-[ACP] + adenosine 3',5'-bisphosphate + H(+). Functionally, transfers the 4'-phosphopantetheine moiety from coenzyme A to a Ser of acyl-carrier-protein. The protein is Holo-[acyl-carrier-protein] synthase of Bacillus cereus (strain ATCC 14579 / DSM 31 / CCUG 7414 / JCM 2152 / NBRC 15305 / NCIMB 9373 / NCTC 2599 / NRRL B-3711).